The following is an 83-amino-acid chain: Colicin-E5 immunity protein in ColE9 (83 aa).

This Escherichia coli protein is Colicin-E5 immunity protein in ColE9.